Reading from the N-terminus, the 151-residue chain is Ribonuclease H (151 aa).

An RNase H type-1 domain is found at 1 to 143 (MYKKIEIFTD…CDQLARLAAK (143 aa)). Positions 10, 48, 70, and 135 each coordinate Mg(2+).

Belongs to the RNase H family. In terms of assembly, monomer. Requires Mg(2+) as cofactor.

The protein localises to the cytoplasm. The catalysed reaction is Endonucleolytic cleavage to 5'-phosphomonoester.. Endonuclease that specifically degrades the RNA of RNA-DNA hybrids. The protein is Ribonuclease H of Blochmanniella pennsylvanica (strain BPEN).